The chain runs to 297 residues: MTKQTEYKRKPEWLKIKLNTNENYTGLKKMMRSKNLHTVCEEAKCPNIHECWAVRKTATFMILGAVCTRACRFCAVKTGLPTELDLQEPERVADSVVQMGLKHVVITAVARDDLKDGGAAVFAETVRAVRRKNPFTSIEVLPSDMGGVEENLKMLMDAKPDILNHNIETVRRLSDRVRARAKYERSLEFLRRAKEMQPDIPTKSSIMVGLGETREDLIEAMDDLRANNVDILTLGQYLQPSKKHLPVLKYYPPAEFAELKEIALSKGFSHCEAGPLVRSSYHADEQVRSAKEKTAGS.

Residues Cys40, Cys45, Cys51, Cys67, Cys71, Cys74, and Ser280 each coordinate [4Fe-4S] cluster. Residues 53 to 269 (AVRKTATFMI…KEIALSKGFS (217 aa)) form the Radical SAM core domain.

This sequence belongs to the radical SAM superfamily. Lipoyl synthase family. [4Fe-4S] cluster is required as a cofactor.

It localises to the cytoplasm. The catalysed reaction is [[Fe-S] cluster scaffold protein carrying a second [4Fe-4S](2+) cluster] + N(6)-octanoyl-L-lysyl-[protein] + 2 oxidized [2Fe-2S]-[ferredoxin] + 2 S-adenosyl-L-methionine + 4 H(+) = [[Fe-S] cluster scaffold protein] + N(6)-[(R)-dihydrolipoyl]-L-lysyl-[protein] + 4 Fe(3+) + 2 hydrogen sulfide + 2 5'-deoxyadenosine + 2 L-methionine + 2 reduced [2Fe-2S]-[ferredoxin]. It functions in the pathway protein modification; protein lipoylation via endogenous pathway; protein N(6)-(lipoyl)lysine from octanoyl-[acyl-carrier-protein]. In terms of biological role, catalyzes the radical-mediated insertion of two sulfur atoms into the C-6 and C-8 positions of the octanoyl moiety bound to the lipoyl domains of lipoate-dependent enzymes, thereby converting the octanoylated domains into lipoylated derivatives. This chain is Lipoyl synthase, found in Bacillus cereus (strain ATCC 14579 / DSM 31 / CCUG 7414 / JCM 2152 / NBRC 15305 / NCIMB 9373 / NCTC 2599 / NRRL B-3711).